The primary structure comprises 507 residues: METQIRADEISRVLKEQINQYNKKIEVSETGSVLSVGDGVARIYGLENAMAGELVEFPGEVFGMVLNLEEGYVGAVLFGEDRHIKEGDVVKRTKKIVSVPVGEALLGRVVDALGNPIDGRGAINTPHSRIVETKAPGIVYRHPVEEPLQTGIKAIDALVPIGRGQRELIIGDRQTGKTTIAVDTIINQKGLNVQCFYVAIGQKQSTVALVVEKLRAAGALEYTTVIAANASDPAPLQYLAAYSGTAMAEYFRDTGRHALIVYDDLTKQAQAYRQLSLLLRRPPGREAYPGDVFYCHSRLLERASKLSADKGGGSLTALPIIETQAGDISAYIPTNVISITDGQIFLESDLFYKGVRPAISVGKSVSRVGGAAQIKAMKQVAGSLKLELAQFRSMEAFAAFASDLDKASQQQLARGRRLIEVLKQPQYSPVKVEEQIIMIFAAGNAFVDQYPETDVKRYEKEMIEFLKNKHSDIIKTISEKKAIADDTKKALLAALEEFKAIFQPSNK.

171 to 178 (GDRQTGKT) is an ATP binding site.

It belongs to the ATPase alpha/beta chains family. In terms of assembly, F-type ATPases have 2 components, CF(1) - the catalytic core - and CF(0) - the membrane proton channel. CF(1) has five subunits: alpha(3), beta(3), gamma(1), delta(1), epsilon(1). CF(0) has three main subunits: a(1), b(2) and c(9-12). The alpha and beta chains form an alternating ring which encloses part of the gamma chain. CF(1) is attached to CF(0) by a central stalk formed by the gamma and epsilon chains, while a peripheral stalk is formed by the delta and b chains.

It localises to the cell inner membrane. The enzyme catalyses ATP + H2O + 4 H(+)(in) = ADP + phosphate + 5 H(+)(out). Functionally, produces ATP from ADP in the presence of a proton gradient across the membrane. The alpha chain is a regulatory subunit. This Bdellovibrio bacteriovorus (strain ATCC 15356 / DSM 50701 / NCIMB 9529 / HD100) protein is ATP synthase subunit alpha.